A 318-amino-acid polypeptide reads, in one-letter code: Polyprenal reductase (318 aa).

The Cytoplasmic segment spans residues 1–19 (MAPWAAAQLWALNPLRALW). Residues 20-40 (LTLAAAFLLTLLLQLVPPGLL) form a helical membrane-spanning segment. Residues 41–80 (PGCALFQDLIRYGKTKREGQSRPAVCRVFDVPKRYFSHFY) lie on the Lumenal side of the membrane. Residues 81–101 (IISALWNGFLLWHLTQSVFLG) traverse the membrane as a helical segment. The Cytoplasmic portion of the chain corresponds to 102-119 (VPFPNWLHGLLRILGASQ). A helical transmembrane segment spans residues 120 to 140 (FQGGELALSAFLVLVFLWLHS). Topologically, residues 141 to 156 (LRRLFECFYVSVFSNT) are lumenal. The chain crosses the membrane as a helical span at residues 157–177 (VIHIVQYCFGLVYYVLTGLTV). The Cytoplasmic portion of the chain corresponds to 178–194 (LSQVPMDGRNAYVIGKN). A helical membrane pass occupies residues 195–215 (LLMQARWFHILGMLMFIWSSV). Over 216–265 (HQYKCHVILGNLRKNKAGVVIHCNHRIPFGDWFEYVSSPNYLAELMIYIS) the chain is Lumenal. A helical transmembrane segment spans residues 266–286 (MAVTFGFHNLTWWLVVTYVFF). At 287–318 (SQALSAFLSHKFYKSKFVSYPKHRKAFLPFLF) the chain is on the cytoplasmic side.

This sequence belongs to the steroid 5-alpha reductase family. Polyprenal reductase subfamily.

The protein resides in the endoplasmic reticulum membrane. The catalysed reaction is a di-trans,poly-cis-dolichal + NADP(+) = a di-trans,poly-cis-polyprenal + NADPH + H(+). It catalyses the reaction a 3-oxo-5alpha-steroid + NADP(+) = a 3-oxo-Delta(4)-steroid + NADPH + H(+). It carries out the reaction androst-4-ene-3,17-dione + NADPH + H(+) = 5alpha-androstan-3,17-dione + NADP(+). The enzyme catalyses 17beta-hydroxy-5alpha-androstan-3-one + NADP(+) = testosterone + NADPH + H(+). It participates in protein modification; protein glycosylation. In terms of biological role, plays a key role in early steps of protein N-linked glycosylation by being involved in the conversion of polyprenol into dolichol. Acts as a polyprenal reductase that mediates the reduction of polyprenal into dolichal in a NADP-dependent mechanism. Dolichols are required for the synthesis of dolichol-linked monosaccharides and the oligosaccharide precursor used for N-glycosylation. Also able to convert testosterone (T) into 5-alpha-dihydrotestosterone (DHT). The sequence is that of Polyprenal reductase (SRD5A3) from Ailuropoda melanoleuca (Giant panda).